Reading from the N-terminus, the 459-residue chain is Argininosuccinate lyase (459 aa).

This sequence belongs to the lyase 1 family. Argininosuccinate lyase subfamily.

It localises to the cytoplasm. It catalyses the reaction 2-(N(omega)-L-arginino)succinate = fumarate + L-arginine. It participates in amino-acid biosynthesis; L-arginine biosynthesis; L-arginine from L-ornithine and carbamoyl phosphate: step 3/3. The protein is Argininosuccinate lyase of Bacillus licheniformis (strain ATCC 14580 / DSM 13 / JCM 2505 / CCUG 7422 / NBRC 12200 / NCIMB 9375 / NCTC 10341 / NRRL NRS-1264 / Gibson 46).